The primary structure comprises 825 residues: MQGMASVVSCEPWALLGRGALCTKARPGGGPAAGTVVAPGSPDRGRPRSRNSLASQDQQGAVTSGTAHKALFSRDTNFLQEINRKQEAAPTGTRHKAKSQGLVTFGDVAVVFSQEEWEWLNSEQRSLYWKVMLDNYRNLASLGLCASQPDMITSLEQGRDPWMMKRKMRKGQHLDLKAMQETKEFPPKDLSEETLFLAVLRKQLLPHRPKCSMVRAAWEGGAVFTTHRGLKTNSGLARDSPAQLVSAQRSFCKSVTWENCGDRGSVGQQSVQEAQDLLPRQDSHAERVTGRTWSTKLECSTFRDQDSECTFERNEQETVTPNRAFSEGRDGMCIESGRWFHLNSSDERSHNCDSGKSFSSNPVVVKETGICSGKKLFQCNECKKTFTQSSSLTVHQRIHTGEKPYKCNQCGKAFSDGSSFARHQRCHTGKKPYECPECGKAFIQNTSLVRHWRYYHTGEKPFDCIDCGKAFSDHIGLNQHRRIHTGEKPYTCEVCHKSFRYGSSLTVHQRIHTGEKPYECEICRKAFSHHASLTQHQRVHSGEKPFKCKECGKAFRQNIHLASHWRIHTGEKPFECGECGKSFSISSQLATHQRIHTGEKPYECKVCRKAFTQKAHLAQHQKTHTGEKPYECKECGKAFSQTTHLIQHQRVHTGEKPYKCLECGKAFGDNSSCTQHRRLHTGQRPYECVECGKTFKTKSSLICHRRCHTGEKPYECSACGKAFSHRQSLSVHQRIHSGKKPYECKECRKTFIQIGHLNQHKRVHTGERTYNYKKGRRAFRQTAHFAHHQQIHSGKSPAHHSLPSTSNPVDLFSKFVWNPSSLPSS.

Residues 26–65 form a disordered region; it reads RPGGGPAAGTVVAPGSPDRGRPRSRNSLASQDQQGAVTSG. Positions 33-42 are enriched in low complexity; that stretch reads AGTVVAPGSP. The span at 51 to 65 shows a compositional bias: polar residues; it reads NSLASQDQQGAVTSG. The 72-residue stretch at 103-174 folds into the KRAB domain; the sequence is VTFGDVAVVF…KRKMRKGQHL (72 aa). 14 consecutive C2H2-type zinc fingers follow at residues 377-399, 405-427, 433-456, 462-484, 490-512, 518-540, 546-568, 574-596, 602-624, 630-652, 658-680, 686-708, 714-736, and 742-764; these read FQCN…QRIH, YKCN…QRCH, YECP…RYYH, FDCI…RRIH, YTCE…QRIH, YECE…QRVH, FKCK…WRIH, FECG…QRIH, YECK…QKTH, YECK…QRVH, YKCL…RRLH, YECV…RRCH, YECS…QRIH, and YECK…KRVH. The C2H2-type 15; degenerate zinc finger occupies 770–792; sequence YNYKKGRRAFRQTAHFAHHQQIH.

The protein belongs to the krueppel C2H2-type zinc-finger protein family. Expressed predominantly in ovary.

Its subcellular location is the nucleus. In terms of biological role, may be involved in transcriptional regulation. May have a role in embryonic development. This chain is Zinc finger protein 28 (Zfp28), found in Mus musculus (Mouse).